The following is a 237-amino-acid chain: Ras-related protein Rab-23 (237 aa).

7 residues coordinate GTP: Val20, Gly21, Lys22, Ser23, Ser24, Tyr38, and Thr41. Ser23 is a binding site for Mg(2+). The short motif at 28-46 (RYCKGIFTKDYKKTIGVDF) is the Switch 1 element. Residues Thr41 and Asp64 each coordinate Mg(2+). Residues 65-84 (TAGQEEFDAITKAYYRGAQA) carry the Switch 2 motif. GTP contacts are provided by Gly67, Asn121, Lys122, Asp124, Ser151, Val152, and Lys153. Ser186 and Ser187 each carry phosphoserine. Over residues 188-208 (SNKIGVFNTSGGSHSGQNSGT) the composition is skewed to polar residues. Positions 188 to 237 (SNKIGVFNTSGGSHSGQNSGTLNGGDVINLRPNKQRTKKNRNPFSSCSIP) are disordered. The residue at position 234 (Cys234) is a Cysteine methyl ester. A lipid anchor (S-geranylgeranyl cysteine) is attached at Cys234. Residues 235 to 237 (SIP) constitute a propeptide, removed in mature form.

The protein belongs to the small GTPase superfamily. Rab family. In terms of assembly, interacts with SUFU. Mg(2+) is required as a cofactor.

The protein localises to the cell membrane. It is found in the cytoplasm. It localises to the cytoplasmic vesicle. The protein resides in the autophagosome. Its subcellular location is the endosome membrane. The protein localises to the phagosome. It is found in the phagosome membrane. The catalysed reaction is GTP + H2O = GDP + phosphate + H(+). Regulated by guanine nucleotide exchange factors (GEFs) which promote the exchange of bound GDP for free GTP. Regulated by GTPase activating proteins (GAPs) which increase the GTP hydrolysis activity. Inhibited by GDP dissociation inhibitors (GDIs). Functionally, the small GTPases Rab are key regulators of intracellular membrane trafficking, from the formation of transport vesicles to their fusion with membranes. Rabs cycle between an inactive GDP-bound form and an active GTP-bound form that is able to recruit to membranes different set of downstream effectors directly responsible for vesicle formation, movement, tethering and fusion. Together with SUFU, prevents nuclear import of GLI1, and thereby inhibits GLI1 transcription factor activity. Regulates GLI1 in differentiating chondrocytes. Likewise, regulates GLI3 proteolytic processing and modulates GLI2 and GLI3 transcription factor activity. Plays a role in autophagic vacuole assembly, and mediates defense against pathogens, such as S.aureus, by promoting their capture by autophagosomes that then merge with lysosomes. This Homo sapiens (Human) protein is Ras-related protein Rab-23.